Consider the following 258-residue polypeptide: MASPREENVYMAKLAEQAERYEEMVEFMEKVVAAADGAEELTVEERNLLSVAYKNVIGARRASWRIISSIEQKEESRGNEDHVASIKEYRSKIESELTSICNGILKLLDSKLIGSAATGDSKVFYLKMKGDYHRYLAEFKTGAERKEAAENTLSAYKAAQDIANAELAPTHPIRLGLALNFSVFYYEILNSPDRACNLAKQAFDEAIAELDTLGEESYKDSTLIMQLLRDNLTLWTSDMQDDGTDEIKEAAPKPDNNE.

The segment at 238–258 (DMQDDGTDEIKEAAPKPDNNE) is disordered. Over residues 245–258 (DEIKEAAPKPDNNE) the composition is skewed to basic and acidic residues.

Belongs to the 14-3-3 family.

The polypeptide is 14-3-3-like protein 16R (Solanum tuberosum (Potato)).